The chain runs to 417 residues: Hyaluronidase-3 (417 aa).

An N-terminal signal peptide occupies residues 1–20 (MTTQLGPALVLGVALCLGCG). Disulfide bonds link Cys42-Cys331, Cys205-Cys220, Cys356-Cys367, Cys361-Cys395, and Cys397-Cys406. The N-linked (GlcNAc...) asparagine glycan is linked to Asn69. The active-site Proton donor is Glu129. N-linked (GlcNAc...) asparagine glycosylation is present at Asn215. Residues 352 to 407 (AAMACSHQRCHGHGRCARRDPGQMEAFLHLWPDGSLGDWKSFSCHCYWGWAGPTCQ) form the EGF-like domain.

The protein belongs to the glycosyl hydrolase 56 family. In terms of processing, N-glycosylated. In terms of tissue distribution, expressed in sperm. Highly expressed in epidermis of the skin, where it is expressed intracellularily in the deep horny layer (at protein level). Bone marrow, testis and kidney.

The protein localises to the secreted. It is found in the cell membrane. The protein resides in the cytoplasmic vesicle. Its subcellular location is the secretory vesicle. It localises to the acrosome. The protein localises to the endoplasmic reticulum. It is found in the early endosome. It carries out the reaction Random hydrolysis of (1-&gt;4)-linkages between N-acetyl-beta-D-glucosamine and D-glucuronate residues in hyaluronate.. Facilitates sperm penetration into the layer of cumulus cells surrounding the egg by digesting hyaluronic acid. Involved in induction of the acrosome reaction in the sperm. Involved in follicular atresia, the breakdown of immature ovarian follicles that are not selected to ovulate. Induces ovarian granulosa cell apoptosis, possibly via apoptotic signaling pathway involving CASP8 and CASP3 activation, and poly(ADP-ribose) polymerase (PARP) cleavage. Has no hyaluronidase activity in embryonic fibroblasts in vitro. Has no hyaluronidase activity in granulosa cells in vitro. The chain is Hyaluronidase-3 (HYAL3) from Homo sapiens (Human).